Consider the following 864-residue polypeptide: Probable M1 family aminopeptidase 2 (864 aa).

Residues glutamate 149 and glycine 289–asparagine 293 contribute to the substrate site. A Zn(2+)-binding site is contributed by histidine 325. Catalysis depends on glutamate 326, which acts as the Proton acceptor. Zn(2+)-binding residues include histidine 329 and glutamate 348.

Belongs to the peptidase M1 family. Zn(2+) is required as a cofactor.

The chain is Probable M1 family aminopeptidase 2 from Encephalitozoon cuniculi (strain GB-M1) (Microsporidian parasite).